The sequence spans 139 residues: Probable disulfide formation protein C (139 aa).

The chain crosses the membrane as a helical span at residues 8-27 (EYALLTAWGASFIATLGSLY). C37 and C40 are disulfide-bonded. 2 helical membrane-spanning segments follow: residues 42 to 61 (YQRI…VAKK) and 68 to 85 (YSLP…YHYA). A disulfide bridge connects residues C99 and C104. The chain crosses the membrane as a helical span at residues 113-135 (GFVTIPFLALIGFITIAVCSFIV).

The protein belongs to the DsbB family. BdbC subfamily.

The protein resides in the cell membrane. In terms of biological role, required for disulfide bond formation in some proteins. This chain is Probable disulfide formation protein C, found in Bacillus cereus (strain ATCC 14579 / DSM 31 / CCUG 7414 / JCM 2152 / NBRC 15305 / NCIMB 9373 / NCTC 2599 / NRRL B-3711).